A 138-amino-acid chain; its full sequence is Thyrotropin subunit beta (138 aa).

An N-terminal signal peptide occupies residues 1-20; that stretch reads MTAIFLMSMLFGLACGQAMS. Cystine bridges form between cysteine 22–cysteine 72, cysteine 36–cysteine 87, cysteine 39–cysteine 125, cysteine 47–cysteine 103, cysteine 51–cysteine 105, and cysteine 108–cysteine 115. Residue asparagine 43 is glycosylated (N-linked (GlcNAc...) asparagine). A propeptide spanning residues 133–138 is cleaved from the precursor; it reads VLEFSI.

The protein belongs to the glycoprotein hormones subunit beta family. Heterodimer of a common alpha chain and a unique beta chain which confers biological specificity to thyrotropin, lutropin, follitropin and gonadotropin.

It localises to the secreted. Its function is as follows. Indispensable for the control of thyroid structure and metabolism. This chain is Thyrotropin subunit beta (TSHB), found in Sus scrofa (Pig).